The sequence spans 461 residues: Protein DVR-1 homolog (461 aa).

Residues 1-30 (MEYSRKTYLDLNIMAKYILILSLFFGPGLS) form the signal peptide. A propeptide spanning residues 31–338 (WDVFYSGDED…QKKGGKRPRK (308 aa)) is cleaved from the precursor. N149 is a glycosylation site (N-linked (GlcNAc...) asparagine). The interval 317–351 (SHLRRNRRAATRQKKGGKRPRKPDTDNDIASRDSA) is disordered. The segment covering 318-337 (HLRRNRRAATRQKKGGKRPR) has biased composition (basic residues). Positions 338–347 (KPDTDNDIAS) are enriched in basic and acidic residues. Intrachain disulfides connect C360–C426, C389–C458, and C393–C460. Residue N402 is glycosylated (N-linked (GlcNAc...) asparagine).

Belongs to the TGF-beta family. In terms of assembly, homodimer; disulfide-linked.

The protein resides in the secreted. This Strongylocentrotus purpuratus (Purple sea urchin) protein is Protein DVR-1 homolog (DVR1).